A 1121-amino-acid chain; its full sequence is Cuscuta receptor 1 (1121 aa).

Positions 1–20 (MGNIKFLLLVFFLIVVVVNG) are cleaved as a signal peptide. At 21-1058 (CWEEERNALL…EESSELEDIQ (1038 aa)) the chain is on the extracellular side. N91 is a glycosylation site (N-linked (GlcNAc...) asparagine). LRR repeat units lie at residues 98 to 122 (FKSL…GFSK), 126 to 152 (LPNL…CWIS), 185 to 209 (LSNL…ALGE), 210 to 233 (LRNL…SLKI), 234 to 259 (FPSL…IIDL), 260 to 282 (SNLE…KGNK), 284 to 308 (MTSL…SLKS), and 309 to 331 (FSSL…IYAL). An N-linked (GlcNAc...) asparagine glycan is attached at N224. N-linked (GlcNAc...) asparagine glycans are attached at residues N298, N321, and N333. An LRR 9 repeat occupies 334–360 (LSTVEYLYFKGSSLNDNFLPNIGQMTS). N372 and N406 each carry an N-linked (GlcNAc...) asparagine glycan. LRR repeat units lie at residues 383-406 (LKYI…CLGN), 407-432 (LTSL…IWRR), 433-457 (LTSL…QFSD), 459-479 (KKLI…EYQN), 507-531 (QYDL…LLEN), 556-580 (HLHL…MSLA), 581-605 (FPKL…ISGI), 607-628 (LTIL…LAVV), 630-654 (SPQL…EFRP), 655-678 (HVLS…VFLS), 680-701 (LITL…TRDN), 702-725 (RRLL…ICNL), 726-749 (KIIN…VSSL), 751-772 (LKHI…IFNF), 773-796 (SSLI…IGSL), 797-820 (SNLN…ICML), 822-846 (NLSI…YLTQ), 914-938 (LKYM…LGNM), 939-961 (SNIH…TFSN), 962-986 (LQEI…LLEL), and 988-1012 (SLAV…QFGT). 3 N-linked (GlcNAc...) asparagine glycosylation sites follow: N531, N576, and N588. The N-linked (GlcNAc...) asparagine glycan is linked to N689. N-linked (GlcNAc...) asparagine glycosylation is present at N771. N-linked (GlcNAc...) asparagine glycans are attached at residues N822, N937, N945, N976, N998, N1014, and N1041. The chain crosses the membrane as a helical span at residues 1059-1079 (CFYIGFVVSFGAILLGLAAAL). Residues 1080–1121 (CLNRHWRRAWFRMIEALMFYCYYFVLDNIVTPIKSRWYKNVG) are Cytoplasmic-facing.

Belongs to the RLP family. Interacts with an 11 kDa glycine-rich protein (GRP) of C.reflexa. Interacts with SOBIR1 and SOBIR1-like kinases; presence or absence of GRP has no effect on interaction.

It localises to the cell membrane. It is found in the cell surface. Functionally, involved in plant defense. Contributes to resistance against parasitic plant C.reflexa. Acts as a receptor for the 11 kDa glycine-rich protein (GRP) of C.reflexa inducing immune responses such as emission of stress-related phytohormone ethylene, reactive oxygen species (ROS) release, and hypersensitive cell death. Recognizes a specific pathogen-associated molecular pattern (PAMP), a cysteine-rich peptide 21 (crip21), from GRP located on the cell wall of C.reflexa. This chain is Cuscuta receptor 1, found in Solanum lycopersicum (Tomato).